The following is a 224-amino-acid chain: Ethylene-inducing xylanase 5 (224 aa).

An N-terminal signal peptide occupies residues 1–16 (MLKSLVVLLLTSRVIA). Residues 32-218 (QATPNSQGTH…SSGFAEMTVA (187 aa)) form the GH11 domain. Asparagine 88 carries N-linked (GlcNAc...) asparagine glycosylation. Glutamate 117 acts as the Nucleophile in catalysis. The active-site Proton donor is the glutamate 205.

This sequence belongs to the glycosyl hydrolase 11 (cellulase G) family.

The enzyme catalyses Endohydrolysis of (1-&gt;4)-beta-D-xylosidic linkages in xylans.. It functions in the pathway glycan degradation; xylan degradation. Endo-1,4-beta-xylanase involved in the hydrolysis of xylan, a major structural heterogeneous polysaccharide found in plant biomass representing the second most abundant polysaccharide in the biosphere, after cellulose. May act as an elicitor of plant defense responses in certain plants but does not exhibit any cell death when transiently expressed in N.benthamiana. This is Ethylene-inducing xylanase 5 from Verticillium dahliae (strain VdLs.17 / ATCC MYA-4575 / FGSC 10137) (Verticillium wilt).